The chain runs to 207 residues: Small ribosomal subunit protein uS4 (207 aa).

Residues 31 to 55 (KCKLDSKPGQHGRTSGARTSDYGTQ) form a disordered region. The span at 42–53 (GRTSGARTSDYG) shows a compositional bias: polar residues. Positions 97-160 (SRLDNVVYRM…KKQARIVEAL (64 aa)) constitute an S4 RNA-binding domain.

Belongs to the universal ribosomal protein uS4 family. Part of the 30S ribosomal subunit. Contacts protein S5. The interaction surface between S4 and S5 is involved in control of translational fidelity.

Functionally, one of the primary rRNA binding proteins, it binds directly to 16S rRNA where it nucleates assembly of the body of the 30S subunit. With S5 and S12 plays an important role in translational accuracy. The chain is Small ribosomal subunit protein uS4 from Burkholderia orbicola (strain MC0-3).